Consider the following 46-residue polypeptide: Viscotoxin-A2 (46 aa).

3 disulfide bridges follow: Cys-3-Cys-40, Cys-4-Cys-32, and Cys-16-Cys-26.

This sequence belongs to the plant thionin (TC 1.C.44) family.

It localises to the secreted. In terms of biological role, thionins are small plant proteins which are toxic to animal cells. They seem to exert their toxic effect at the level of the cell membrane. Their precise function is not known. In Viscum album (European mistletoe), this protein is Viscotoxin-A2 (THI2.3).